Consider the following 272-residue polypeptide: Hydroxyacylglutathione hydrolase (272 aa).

Zn(2+)-binding residues include H62, H64, D66, H67, H126, D146, and H184.

This sequence belongs to the metallo-beta-lactamase superfamily. Glyoxalase II family. As to quaternary structure, monomer. Requires Zn(2+) as cofactor.

It carries out the reaction an S-(2-hydroxyacyl)glutathione + H2O = a 2-hydroxy carboxylate + glutathione + H(+). The protein operates within secondary metabolite metabolism; methylglyoxal degradation; (R)-lactate from methylglyoxal: step 2/2. Functionally, thiolesterase that catalyzes the hydrolysis of S-D-lactoyl-glutathione to form glutathione and D-lactic acid. The protein is Hydroxyacylglutathione hydrolase of Saccharophagus degradans (strain 2-40 / ATCC 43961 / DSM 17024).